Reading from the N-terminus, the 121-residue chain is MDNQFQSSKPIYLQIADQIFYRLVRKELLPGDKLPSVREMAIQTKVNPNTIQRTYSEMERLGIVETRRGQGTFIAEKAEIVDELKDKLTREVLEGFVKQMKELGLTKEEMLEGIKTFTEGG.

An HTH gntR-type domain is found at 9–77 (KPIYLQIADQ…RGQGTFIAEK (69 aa)). Residues 37–56 (VREMAIQTKVNPNTIQRTYS) constitute a DNA-binding region (H-T-H motif).

This is an uncharacterized protein from Bacillus subtilis (strain 168).